The sequence spans 139 residues: MTTHNRPARVAEEFRHELSAILARGLKDPRITGFVTVTGSKMSPDLKEATVYVSIHGDERVRKDTFAGLQAAAGFLQREVSRALRLRNTPHLRFVYDESVARGDRIERLLREARTQGQAAPAPDVEPAPGAAPDDEAEE.

Positions 112-139 (EARTQGQAAPAPDVEPAPGAAPDDEAEE) are disordered. Low complexity predominate over residues 119-132 (AAPAPDVEPAPGAA).

This sequence belongs to the RbfA family. In terms of assembly, monomer. Binds 30S ribosomal subunits, but not 50S ribosomal subunits or 70S ribosomes.

The protein localises to the cytoplasm. Functionally, one of several proteins that assist in the late maturation steps of the functional core of the 30S ribosomal subunit. Associates with free 30S ribosomal subunits (but not with 30S subunits that are part of 70S ribosomes or polysomes). Required for efficient processing of 16S rRNA. May interact with the 5'-terminal helix region of 16S rRNA. The chain is Ribosome-binding factor A from Anaeromyxobacter dehalogenans (strain 2CP-1 / ATCC BAA-258).